The sequence spans 109 residues: Polyprenyl transferase subC (109 aa).

Helical transmembrane passes span 39 to 59 and 84 to 104; these read LFCV…NDWI and QAFV…HVML.

Belongs to the UbiA prenyltransferase family. Mg(2+) serves as cofactor.

Its subcellular location is the membrane. It functions in the pathway secondary metabolite biosynthesis; terpenoid biosynthesis. Polyprenyl transferase; part of the gene cluster that mediates the biosynthesis of the immunosuppressants subglutinols, meroterpenoids consisting of an alpha-pyrone (4-hydroxy-5,6-dimethyl-2-pyrone) moiety attached to a decalin core fused to a five-membered cyclic ether carrying a prenylside chain. The first step of the pathway is the synthesis of the alpha-pyrone moiety by the polyketide synthase subA via condensation of one acetyl-CoA starter unit with 3 malonyl-CoA units and 2 methylations. The alpha-pyrone is then combined with geranylgeranyl pyrophosphate (GGPP) formed by the GGPP synthase subD through the action of the prenyltransferase subC to yield a linear alpha-pyrone diterpenoid. Subsequent steps in the subglutinol biosynthetic pathway involve the decalin core formation, which is thought to be initiated by the epoxidation of the C10-C11 olefin by the FAD-dependent oxidoreductase subE. The following cyclization cascade would be catalyzed by the terpene cyclase subB. Lastly, the FAD-dependent dehydrogenase subF probably catalyzes the five-membered cyclic ether formation to complete the formation of subglutinol A. Subsequent redox reactions appear to give rise to subglutinol C and D, however, it remains unclear which enzymes are responsible for these transformations. SubD may have secondary function in the conversion of the identified subglutinols to subglutinol analog 45, which seems to be the major product of the cluster. This chain is Polyprenyl transferase subC, found in Metarhizium robertsii (strain ARSEF 23 / ATCC MYA-3075) (Metarhizium anisopliae (strain ARSEF 23)).